The following is an 829-amino-acid chain: Periplasmic nitrate reductase (829 aa).

The tat-type signal signal peptide spans Met-1 to Ala-30. Residues Ile-41–Asp-97 form the 4Fe-4S Mo/W bis-MGD-type domain. 4 residues coordinate [4Fe-4S] cluster: Cys-48, Cys-51, Cys-55, and Cys-83. Mo-bis(molybdopterin guanine dinucleotide)-binding positions include Lys-85, Gln-152, Asn-177, Cys-181, Trp-214–Met-221, Ser-245–His-249, Gln-264–Asp-266, Met-374, Gln-378, Asn-484, Ser-510–Asp-511, Lys-533, Asp-560, and Thr-719–Thr-728. A substrate-binding site is contributed by Phe-795. Mo-bis(molybdopterin guanine dinucleotide)-binding residues include Asn-803 and Lys-820.

The protein belongs to the prokaryotic molybdopterin-containing oxidoreductase family. NasA/NapA/NarB subfamily. As to quaternary structure, component of the periplasmic nitrate reductase NapAB complex composed of NapA and NapB. Requires [4Fe-4S] cluster as cofactor. It depends on Mo-bis(molybdopterin guanine dinucleotide) as a cofactor. Post-translationally, predicted to be exported by the Tat system. The position of the signal peptide cleavage has not been experimentally proven.

The protein localises to the periplasm. It carries out the reaction 2 Fe(II)-[cytochrome] + nitrate + 2 H(+) = 2 Fe(III)-[cytochrome] + nitrite + H2O. Its function is as follows. Catalytic subunit of the periplasmic nitrate reductase complex NapAB. Receives electrons from NapB and catalyzes the reduction of nitrate to nitrite. This is Periplasmic nitrate reductase from Aeromonas hydrophila subsp. hydrophila (strain ATCC 7966 / DSM 30187 / BCRC 13018 / CCUG 14551 / JCM 1027 / KCTC 2358 / NCIMB 9240 / NCTC 8049).